The following is a 118-amino-acid chain: Small ribosomal subunit protein uS13 (118 aa).

The segment at 94 to 118 (SLPLRGQRTKTNARTRKGPRKPIKK) is disordered.

This sequence belongs to the universal ribosomal protein uS13 family. Part of the 30S ribosomal subunit. Forms a loose heterodimer with protein S19. Forms two bridges to the 50S subunit in the 70S ribosome.

Its function is as follows. Located at the top of the head of the 30S subunit, it contacts several helices of the 16S rRNA. In the 70S ribosome it contacts the 23S rRNA (bridge B1a) and protein L5 of the 50S subunit (bridge B1b), connecting the 2 subunits; these bridges are implicated in subunit movement. Contacts the tRNAs in the A and P-sites. The protein is Small ribosomal subunit protein uS13 of Idiomarina loihiensis (strain ATCC BAA-735 / DSM 15497 / L2-TR).